The following is a 123-amino-acid chain: Ribosome-binding factor A (123 aa).

The protein belongs to the RbfA family. Monomer. Binds 30S ribosomal subunits, but not 50S ribosomal subunits or 70S ribosomes.

It is found in the cytoplasm. One of several proteins that assist in the late maturation steps of the functional core of the 30S ribosomal subunit. Associates with free 30S ribosomal subunits (but not with 30S subunits that are part of 70S ribosomes or polysomes). Required for efficient processing of 16S rRNA. May interact with the 5'-terminal helix region of 16S rRNA. The protein is Ribosome-binding factor A of Ralstonia nicotianae (strain ATCC BAA-1114 / GMI1000) (Ralstonia solanacearum).